Consider the following 151-residue polypeptide: Large ribosomal subunit protein uL22 (151 aa).

Belongs to the universal ribosomal protein uL22 family. As to quaternary structure, part of the 50S ribosomal subunit.

In terms of biological role, this protein binds specifically to 23S rRNA. It makes multiple contacts with different domains of the 23S rRNA in the assembled 50S subunit and ribosome. The globular domain of the protein is located near the polypeptide exit tunnel on the outside of the subunit, while an extended beta-hairpin is found that lines the wall of the exit tunnel in the center of the 70S ribosome. The chain is Large ribosomal subunit protein uL22 from Methanococcoides burtonii (strain DSM 6242 / NBRC 107633 / OCM 468 / ACE-M).